A 391-amino-acid chain; its full sequence is Protein-glutamate methylesterase/protein-glutamine glutaminase of group 2 operon (391 aa).

The Response regulatory domain occupies 20–138 (RVMIVDDSVV…EPQAADIFKH (119 aa)). Aspartate 71 carries the post-translational modification 4-aspartylphosphate. Residues 196-383 (PTAPRVLLIG…PLNQIGPKVV (188 aa)) form the CheB-type methylesterase domain. Catalysis depends on residues serine 207, histidine 235, and aspartate 331.

The protein belongs to the CheB family. Phosphorylated by CheA. Phosphorylation of the N-terminal regulatory domain activates the methylesterase activity.

Its subcellular location is the cytoplasm. The catalysed reaction is [protein]-L-glutamate 5-O-methyl ester + H2O = L-glutamyl-[protein] + methanol + H(+). The enzyme catalyses L-glutaminyl-[protein] + H2O = L-glutamyl-[protein] + NH4(+). Involved in chemotaxis. Part of a chemotaxis signal transduction system that modulates chemotaxis in response to various stimuli. Catalyzes the demethylation of specific methylglutamate residues introduced into the chemoreceptors (methyl-accepting chemotaxis proteins or MCP) by CheR. Also mediates the irreversible deamidation of specific glutamine residues to glutamic acid. The sequence is that of Protein-glutamate methylesterase/protein-glutamine glutaminase of group 2 operon from Rhodopseudomonas palustris (strain ATCC BAA-98 / CGA009).